The sequence spans 62 residues: MATKLKITWVKSAIGYAKNQKLTVATLGLKKLHQSVLHDDTPAIRGMIRTVNHLVTVEEVEA.

This sequence belongs to the universal ribosomal protein uL30 family. As to quaternary structure, part of the 50S ribosomal subunit.

This is Large ribosomal subunit protein uL30 from Heliobacterium modesticaldum (strain ATCC 51547 / Ice1).